A 62-amino-acid polypeptide reads, in one-letter code: Lepidopteran-selective toxin (62 aa).

The signal sequence occupies residues 1–24; that stretch reads MKFLYGVILIALFLTVMTATLSEA. 4 cysteine pairs are disulfide-bonded: Cys26-Cys43, Cys29-Cys51, Cys40-Cys56, and Cys44-Cys58. A propeptide is located at residue Tyr62.

It belongs to the short scorpion toxin superfamily. Chloride channel inhibitor family. In terms of tissue distribution, expressed by the venom gland.

The protein localises to the secreted. Its function is as follows. Toxin with unknown function in healthy organisms. On glioma cells, interacts with chloride channels (probably ClC-3/CLCN3) and MMP2 at the surface of glioma cells. This complex is then internalized via caveolae, thus inhibiting the chloride channels necessary for cell shrinkage and tumor propagation. Induces flaccid paralysis in H.virescens larvae. Is not toxic to S.falculata larvae or mice. The chain is Lepidopteran-selective toxin from Hottentotta tamulus (Eastern Indian scorpion).